We begin with the raw amino-acid sequence, 116 residues long: uncharacterized protein (116 aa).

The next 3 membrane-spanning stretches (helical) occupy residues 8–28 (FMIYQVIGTVIGIAGIIVSFA), 39–59 (GLLLWLILWVSVILFSLNPPF), and 75–95 (FLLIIGILGAYYLLFRIYLMV).

The protein to M.jannaschii MJ1580.

The protein localises to the cell membrane. This is an uncharacterized protein from Methanothermobacter thermautotrophicus (strain ATCC 29096 / DSM 1053 / JCM 10044 / NBRC 100330 / Delta H) (Methanobacterium thermoautotrophicum).